The chain runs to 348 residues: NADH-ubiquinone oxidoreductase chain 2 (348 aa).

Transmembrane regions (helical) follow at residues 3 to 23 (PFIL…TFAS), 24 to 44 (SHWL…IPLM), 60 to 80 (FITQ…NAWI), 95 to 115 (ASML…HFWL), 136 to 156 (LAPF…ITFL), 177 to 197 (ILAY…QFNQ), 198 to 218 (QLAL…FMIF), 239 to 259 (LTAI…LSGF), 273 to 293 (DIPL…YFYL), and 325 to 345 (LAIS…TLAL).

It belongs to the complex I subunit 2 family.

The protein resides in the mitochondrion inner membrane. The catalysed reaction is a ubiquinone + NADH + 5 H(+)(in) = a ubiquinol + NAD(+) + 4 H(+)(out). Functionally, core subunit of the mitochondrial membrane respiratory chain NADH dehydrogenase (Complex I) that is believed to belong to the minimal assembly required for catalysis. Complex I functions in the transfer of electrons from NADH to the respiratory chain. The immediate electron acceptor for the enzyme is believed to be ubiquinone. The sequence is that of NADH-ubiquinone oxidoreductase chain 2 (MT-ND2) from Gadus morhua (Atlantic cod).